We begin with the raw amino-acid sequence, 630 residues long: Chaperone protein DnaK (630 aa).

Threonine 198 bears the Phosphothreonine; by autocatalysis mark. A disordered region spans residues 604 to 630 (AAAAPGEEAPKDDDVVDAEFSEVDDKK). Positions 617 to 630 (DVVDAEFSEVDDKK) are enriched in acidic residues.

The protein belongs to the heat shock protein 70 family.

Acts as a chaperone. This Rhizorhabdus wittichii (strain DSM 6014 / CCUG 31198 / JCM 15750 / NBRC 105917 / EY 4224 / RW1) (Sphingomonas wittichii) protein is Chaperone protein DnaK.